A 511-amino-acid chain; its full sequence is Chromosomal replication initiator protein DnaA (511 aa).

The domain I, interacts with DnaA modulators stretch occupies residues 1-87; the sequence is MSVELWQQCV…IGSKRSSAPR (87 aa). The interval 87–174 is domain II; that stretch reads RAAPNAPLAA…QVEGALKHTS (88 aa). The tract at residues 133-160 is disordered; sequence VATHDEPSRDSFDPMAGASSQQAPARAE. The span at 134–144 shows a compositional bias: basic and acidic residues; that stretch reads ATHDEPSRDSF. A domain III, AAA+ region region spans residues 175-391; sequence YLNRTFTFEN…GALKRVIAHS (217 aa). ATP-binding residues include Gly219, Gly221, Lys222, and Thr223. The interval 392–511 is domain IV, binds dsDNA; that stretch reads HFMGRDITIE…YKNLLRTLTT (120 aa).

It belongs to the DnaA family. As to quaternary structure, oligomerizes as a right-handed, spiral filament on DNA at oriC.

It is found in the cytoplasm. Plays an essential role in the initiation and regulation of chromosomal replication. ATP-DnaA binds to the origin of replication (oriC) to initiate formation of the DNA replication initiation complex once per cell cycle. Binds the DnaA box (a 9 base pair repeat at the origin) and separates the double-stranded (ds)DNA. Forms a right-handed helical filament on oriC DNA; dsDNA binds to the exterior of the filament while single-stranded (ss)DNA is stabiized in the filament's interior. The ATP-DnaA-oriC complex binds and stabilizes one strand of the AT-rich DNA unwinding element (DUE), permitting loading of DNA polymerase. After initiation quickly degrades to an ADP-DnaA complex that is not apt for DNA replication. Binds acidic phospholipids. The chain is Chromosomal replication initiator protein DnaA from Pseudomonas syringae pv. tomato (strain ATCC BAA-871 / DC3000).